Here is a 389-residue protein sequence, read N- to C-terminus: Succinate--CoA ligase [ADP-forming] subunit beta (389 aa).

The ATP-grasp domain maps to 9–236; sequence RDMFEAHGVP…KDSADPLEAK (228 aa). ATP-binding positions include K45, 52-54, A94, and E99; that span reads GRG. 2 residues coordinate Mg(2+): N191 and D205. Substrate is bound by residues N256 and 318–320; that span reads GIT.

The protein belongs to the succinate/malate CoA ligase beta subunit family. In terms of assembly, heterotetramer of two alpha and two beta subunits. It depends on Mg(2+) as a cofactor.

The catalysed reaction is succinate + ATP + CoA = succinyl-CoA + ADP + phosphate. It carries out the reaction GTP + succinate + CoA = succinyl-CoA + GDP + phosphate. It participates in carbohydrate metabolism; tricarboxylic acid cycle; succinate from succinyl-CoA (ligase route): step 1/1. Its function is as follows. Succinyl-CoA synthetase functions in the citric acid cycle (TCA), coupling the hydrolysis of succinyl-CoA to the synthesis of either ATP or GTP and thus represents the only step of substrate-level phosphorylation in the TCA. The beta subunit provides nucleotide specificity of the enzyme and binds the substrate succinate, while the binding sites for coenzyme A and phosphate are found in the alpha subunit. The polypeptide is Succinate--CoA ligase [ADP-forming] subunit beta (Renibacterium salmoninarum (strain ATCC 33209 / DSM 20767 / JCM 11484 / NBRC 15589 / NCIMB 2235)).